Here is a 335-residue protein sequence, read N- to C-terminus: Nicotinate-nucleotide--dimethylbenzimidazole phosphoribosyltransferase (335 aa).

Residue Glu-304 is the Proton acceptor of the active site.

It belongs to the CobT family.

It catalyses the reaction 5,6-dimethylbenzimidazole + nicotinate beta-D-ribonucleotide = alpha-ribazole 5'-phosphate + nicotinate + H(+). Its pathway is nucleoside biosynthesis; alpha-ribazole biosynthesis; alpha-ribazole from 5,6-dimethylbenzimidazole: step 1/2. Its function is as follows. Catalyzes the synthesis of alpha-ribazole-5'-phosphate from nicotinate mononucleotide (NAMN) and 5,6-dimethylbenzimidazole (DMB). This Thermus thermophilus (strain ATCC 27634 / DSM 579 / HB8) protein is Nicotinate-nucleotide--dimethylbenzimidazole phosphoribosyltransferase.